The primary structure comprises 1218 residues: DNA polymerase subunit gamma-1 (1218 aa).

Positions 31 to 50 (LDPVPSDGRPPSQMPSSENG) are disordered. The Exo I signature appears at 179–183 (VFDVE). The active-site Exonuclease activity is D181. The short motif at 250–258 (VGHNVSFDR) is the Exo II element. S289 is a binding site for DNA. Residues 378-386 (YCARDVWAT) carry the Exo III motif. Residues 484 to 524 (KKVKKPASASKLPIEGAGPFGDPMDQEDPGPPSEEEELQRS) form a disordered region. The segment at 492–553 (ASKLPIEGAG…RPQHLPGHPG (62 aa)) is accessory-interacting determinant. Residues 507–520 (MDQEDPGPPSEEEE) show a composition bias toward acidic residues. R561 contributes to the RNA binding site. S575 provides a ligand contact to DNA. Positions 733, 742, and 747 each coordinate RNA. DNA-binding residues include K785 and T828. The tract at residues 837–843 (TWLTASN) is trigger loop. RNA is bound by residues S842 and R848. The Pol A signature appears at 866–875 (VGADVDSQEL). Residues D869, V870, S872, E874, R922, K926, and Y930 each coordinate a 2'-deoxyribonucleoside 5'-triphosphate. Residues D869 and V870 each contribute to the Mg(2+) site. The Pol B motif lies at 922 to 937 (REHAKIFNYGRIYGAG). DNA is bound by residues T1073 and S1074. A Pol C motif is present at residues 1113 to 1120 (HDEVRYLV). D1114 is a binding site for a 2'-deoxyribonucleoside 5'-triphosphate. Position 1114 (D1114) interacts with Mg(2+).

This sequence belongs to the DNA polymerase type-A family. Heterotrimer composed of a catalytic subunit and a homodimer of accessory subunits (POLG:POLG2). Interacts with TTC3. Interacts with LIG3. It depends on Mg(2+) as a cofactor.

The protein resides in the mitochondrion. It is found in the mitochondrion matrix. Its subcellular location is the mitochondrion nucleoid. It carries out the reaction DNA(n) + a 2'-deoxyribonucleoside 5'-triphosphate = DNA(n+1) + diphosphate. The enzyme catalyses a 3'-end 2'-deoxyribonucleotidyl-deoxyribonucleotide-DNA + H2O = a 3'-end 2'-deoxyribonucleotide-DNA + a 2'-deoxyribonucleoside 5'-phosphate + H(+). The catalysed reaction is a 5'-end 2'-deoxyribose-2'-deoxyribonucleotide-DNA = (2E,4S)-4-hydroxypenten-2-al-5-phosphate + a 5'-end 5'-phospho-2'-deoxyribonucleoside-DNA + H(+). Inhibited by dideoxynucleotides such as antiviral agent zalcitabine. In terms of biological role, catalytic subunit of DNA polymerase gamma solely responsible for replication of mitochondrial DNA (mtDNA). Replicates both heavy and light strands of the circular mtDNA genome using a single-stranded DNA template, RNA primers and the four deoxyribonucleoside triphosphates as substrates. Has 5' -&gt; 3' polymerase activity. Functionally interacts with TWNK and SSBP1 at the replication fork to form a highly processive replisome, where TWNK unwinds the double-stranded DNA template prior to replication and SSBP1 covers the parental heavy strand to enable continuous replication of the entire mitochondrial genome. A single nucleotide incorporation cycle includes binding of the incoming nucleotide at the insertion site, a phosphodiester bond formation reaction that extends the 3'-end of the primer DNA, and translocation of the primer terminus to the post-insertion site. After completing replication of a mtDNA strand, mediates 3' -&gt; 5' exonucleolytic degradation at the nick to enable proper ligation. Highly accurate due to high nucleotide selectivity and 3' -&gt; 5' exonucleolytic proofreading. Proficiently corrects base substitutions, single-base additions and deletions in non-repetitive sequences and short repeats, but displays lower proofreading activity when replicating longer homopolymeric stretches. Exerts exonuclease activity toward single-stranded DNA and double-stranded DNA containing 3'-terminal mispairs. When a misincorporation occurs, transitions from replication to a pro-nucleolytic editing mode and removes the missincorporated nucleoside in the exonuclease active site. Proceeds via an SN2 nucleolytic mechanism in which Asp-198 catalyzes phosphodiester bond hydrolysis and Glu-200 stabilizes the leaving group. As a result the primer strand becomes one nucleotide shorter and is positioned in the post-insertion site, ready to resume DNA synthesis. Exerts 5'-deoxyribose phosphate (dRP) lyase activity and mediates repair-associated mtDNA synthesis (gap filling) in base-excision repair pathway. Catalyzes the release of the 5'-terminal 2-deoxyribose-5-phosphate sugar moiety from incised apurinic/apyrimidinic (AP) sites to produce a substrate for DNA ligase. The dRP lyase reaction does not require divalent metal ions and likely proceeds via a Schiff base intermediate in a beta-elimination reaction mechanism. This chain is DNA polymerase subunit gamma-1, found in Mus musculus (Mouse).